A 240-amino-acid chain; its full sequence is Small ribosomal subunit protein eS4 (240 aa).

The region spanning 37-99 (VPLVVLLRDV…RGEFFRVFPD (63 aa)) is the S4 RNA-binding domain.

Belongs to the eukaryotic ribosomal protein eS4 family.

This is Small ribosomal subunit protein eS4 from Halorubrum lacusprofundi (strain ATCC 49239 / DSM 5036 / JCM 8891 / ACAM 34).